A 68-amino-acid polypeptide reads, in one-letter code: Probable tautomerase HP_0924 (68 aa).

The Proton acceptor; via imino nitrogen role is filled by proline 2.

This sequence belongs to the 4-oxalocrotonate tautomerase family.

In Helicobacter pylori (strain ATCC 700392 / 26695) (Campylobacter pylori), this protein is Probable tautomerase HP_0924.